The sequence spans 130 residues: Large ribosomal subunit protein bL17 (130 aa).

This sequence belongs to the bacterial ribosomal protein bL17 family. Part of the 50S ribosomal subunit. Contacts protein L32.

This is Large ribosomal subunit protein bL17 from Paraburkholderia xenovorans (strain LB400).